Reading from the N-terminus, the 607-residue chain is MDNEQRLKRRENIRNFSIIAHIDHGKSTLADRILENTKSVETRDMQDQLLDSMDLERERGITIKLNAVRLKYEAKDGNTYTFHLIDTPGHVDFTYEVSRSLAACEGAILVVDAAQGIEAQTLANVYLALDNELELLPVINKIDLPAAEPERVKQEIEDMIGLDQDDVVLASAKSNIGIEEILEKIVEVVPAPDGDPEAPLKALIFDSEYDPYRGVISSIRIVDGVVKAGDKIRMMATGKEFEVTEVGINTPKQLPVDELTVGDVGYIIASIKNVDDSRVGDTITLASRPASEPLQGYKKMNPMVYCGLFPIDNKNYNDLREALEKLQLNDASLEFEPESSQALGFGYRTGFLGMLHMEIIQERIEREFGIELIATAPSVIYQCILRDGSEVTVDNPAQMPDRDKIDKIFEPYVRATMMVPNDYVGAVMELCQRKRGQFINMDYLDDIRVNIVYELPLAEVVFDFFDQLKSNTKGYASFDYEFIENKESNLVKMDILLNGDKVDALSFIVHRDFAYERGKALVEKLKTLIPRQQFEVPVQAAIGQKIVARTNIKSMGKNVLAKCYGGDISRKRKLLEKQKAGKAKMKAVGNVEIPQDAFLAVLKMDDE.

The 183-residue stretch at 11 to 193 folds into the tr-type G domain; it reads ENIRNFSIIA…KIVEVVPAPD (183 aa). Residues 23–28 and 140–143 each bind GTP; these read DHGKST and NKID.

It belongs to the TRAFAC class translation factor GTPase superfamily. Classic translation factor GTPase family. LepA subfamily.

It is found in the cell membrane. It catalyses the reaction GTP + H2O = GDP + phosphate + H(+). Its function is as follows. Required for accurate and efficient protein synthesis under certain stress conditions. May act as a fidelity factor of the translation reaction, by catalyzing a one-codon backward translocation of tRNAs on improperly translocated ribosomes. Back-translocation proceeds from a post-translocation (POST) complex to a pre-translocation (PRE) complex, thus giving elongation factor G a second chance to translocate the tRNAs correctly. Binds to ribosomes in a GTP-dependent manner. This is Elongation factor 4 from Staphylococcus aureus (strain N315).